Consider the following 210-residue polypeptide: Endonuclease III (210 aa).

In terms of domain architecture, HhH spans 108-127; the sequence is RIELESLPGVGRKTANIILN. [4Fe-4S] cluster is bound by residues Cys187, Cys194, Cys197, and Cys203.

It belongs to the Nth/MutY family. [4Fe-4S] cluster is required as a cofactor.

It carries out the reaction 2'-deoxyribonucleotide-(2'-deoxyribose 5'-phosphate)-2'-deoxyribonucleotide-DNA = a 3'-end 2'-deoxyribonucleotide-(2,3-dehydro-2,3-deoxyribose 5'-phosphate)-DNA + a 5'-end 5'-phospho-2'-deoxyribonucleoside-DNA + H(+). Its function is as follows. DNA repair enzyme that has both DNA N-glycosylase activity and AP-lyase activity. The DNA N-glycosylase activity releases various damaged pyrimidines from DNA by cleaving the N-glycosidic bond, leaving an AP (apurinic/apyrimidinic) site. The AP-lyase activity cleaves the phosphodiester bond 3' to the AP site by a beta-elimination, leaving a 3'-terminal unsaturated sugar and a product with a terminal 5'-phosphate. The sequence is that of Endonuclease III from Buchnera aphidicola subsp. Acyrthosiphon pisum (strain APS) (Acyrthosiphon pisum symbiotic bacterium).